Consider the following 161-residue polypeptide: 6,7-dimethyl-8-ribityllumazine synthase (161 aa).

Residues tryptophan 26, 58 to 60, and 81 to 83 contribute to the 5-amino-6-(D-ribitylamino)uracil site; these read SFE and VVI. A (2S)-2-hydroxy-3-oxobutyl phosphate-binding site is contributed by 86-87; it reads GT. Histidine 89 (proton donor) is an active-site residue. A 5-amino-6-(D-ribitylamino)uracil-binding site is contributed by phenylalanine 114. Arginine 128 contributes to the (2S)-2-hydroxy-3-oxobutyl phosphate binding site.

It belongs to the DMRL synthase family.

The catalysed reaction is (2S)-2-hydroxy-3-oxobutyl phosphate + 5-amino-6-(D-ribitylamino)uracil = 6,7-dimethyl-8-(1-D-ribityl)lumazine + phosphate + 2 H2O + H(+). Its pathway is cofactor biosynthesis; riboflavin biosynthesis; riboflavin from 2-hydroxy-3-oxobutyl phosphate and 5-amino-6-(D-ribitylamino)uracil: step 1/2. In terms of biological role, catalyzes the formation of 6,7-dimethyl-8-ribityllumazine by condensation of 5-amino-6-(D-ribitylamino)uracil with 3,4-dihydroxy-2-butanone 4-phosphate. This is the penultimate step in the biosynthesis of riboflavin. This Streptomyces coelicolor (strain ATCC BAA-471 / A3(2) / M145) protein is 6,7-dimethyl-8-ribityllumazine synthase.